The primary structure comprises 253 residues: tRNA pseudouridine synthase A (253 aa).

D53 serves as the catalytic Nucleophile. Y111 contributes to the substrate binding site.

Belongs to the tRNA pseudouridine synthase TruA family. In terms of assembly, homodimer.

The enzyme catalyses uridine(38/39/40) in tRNA = pseudouridine(38/39/40) in tRNA. Formation of pseudouridine at positions 38, 39 and 40 in the anticodon stem and loop of transfer RNAs. The protein is tRNA pseudouridine synthase A of Oceanobacillus iheyensis (strain DSM 14371 / CIP 107618 / JCM 11309 / KCTC 3954 / HTE831).